A 132-amino-acid chain; its full sequence is Glycine cleavage system H protein (132 aa).

Residues 24–106 enclose the Lipoyl-binding domain; that stretch reads LVRIGISAFA…HGEGWLLVVR (83 aa). Lys65 is subject to N6-lipoyllysine.

It belongs to the GcvH family. In terms of assembly, the glycine cleavage system is composed of four proteins: P, T, L and H. The cofactor is (R)-lipoate.

Functionally, the glycine cleavage system catalyzes the degradation of glycine. The H protein shuttles the methylamine group of glycine from the P protein to the T protein. The sequence is that of Glycine cleavage system H protein from Prochlorococcus marinus (strain MIT 9313).